Reading from the N-terminus, the 351-residue chain is Phospho-N-acetylmuramoyl-pentapeptide-transferase (351 aa).

The next 10 membrane-spanning stretches (helical) occupy residues 22-42 (ILAFFLSFFITIFIMPKFISW), 65-85 (TPTMGGLIYITSAVISILITT), 87-107 (FNKYVLLTLLLLVYFTYLGFI), 128-148 (FLLQWVGALVISYLLIKVGFD), 158-178 (YPIFDMGYYAVIFWAFIIVAM), 190-210 (GLATVPSIFSLFTLGILLYIV), 225-245 (LGVGELTIIVFALIGALLGFL), 254-274 (VFMGDSGSLPLGAVIGFLAIV), 279-299 (LLLIFIAFVFIMETVSVILQV), and 328-348 (KITIRFWIMALITNLIAILSI).

The protein belongs to the glycosyltransferase 4 family. MraY subfamily. Requires Mg(2+) as cofactor.

The protein localises to the cell inner membrane. The enzyme catalyses UDP-N-acetyl-alpha-D-muramoyl-L-alanyl-gamma-D-glutamyl-meso-2,6-diaminopimeloyl-D-alanyl-D-alanine + di-trans,octa-cis-undecaprenyl phosphate = di-trans,octa-cis-undecaprenyl diphospho-N-acetyl-alpha-D-muramoyl-L-alanyl-D-glutamyl-meso-2,6-diaminopimeloyl-D-alanyl-D-alanine + UMP. Its pathway is cell wall biogenesis; peptidoglycan biosynthesis. Catalyzes the initial step of the lipid cycle reactions in the biosynthesis of the cell wall peptidoglycan: transfers peptidoglycan precursor phospho-MurNAc-pentapeptide from UDP-MurNAc-pentapeptide onto the lipid carrier undecaprenyl phosphate, yielding undecaprenyl-pyrophosphoryl-MurNAc-pentapeptide, known as lipid I. The chain is Phospho-N-acetylmuramoyl-pentapeptide-transferase from Nautilia profundicola (strain ATCC BAA-1463 / DSM 18972 / AmH).